Here is a 3135-residue protein sequence, read N- to C-terminus: Gametocyte surface protein P230 (3135 aa).

An N-terminal signal peptide occupies residues 1–20 (MKKIITLKNLFLIILVYIFS). N-linked (GlcNAc...) asparagine glycans are attached at residues Asn-76, Asn-111, Asn-135, and Asn-239. The segment at 266–470 (EEDMSPRDNF…EEKDEGGESF (205 aa)) is disordered. Composition is skewed to acidic residues over residues 276–321 (VIDD…EEQL) and 329–345 (VGAE…DEDS). Over residues 346–358 (VEARDGDMIRVDE) the composition is skewed to basic and acidic residues. Composition is skewed to acidic residues over residues 376-444 (DVDE…EGEY) and 458-467 (GDEEEKDEGG). N-linked (GlcNAc...) asparagine glycosylation occurs at Asn-585. 6-Cys domains are found at residues 589-730 (KEYV…VEPY) and 733-887 (KING…INEE). 4 disulfide bridges follow: Cys-593/Cys-611, Cys-626/Cys-706, Cys-737/Cys-781, and Cys-804/Cys-862. Asn-821, Asn-829, Asn-889, Asn-961, Asn-1079, Asn-1089, and Asn-1153 each carry an N-linked (GlcNAc...) asparagine glycan. 4 consecutive 6-Cys domains span residues 918–1133 (HDYT…ISKQ), 1136–1275 (KIKG…LKRE), 1285–1432 (KIYK…VSKR), and 1435–1560 (KVKG…YKKL). 3 disulfide bridges follow: Cys-1140-Cys-1161, Cys-1175-Cys-1251, and Cys-1200-Cys-1249. 7 N-linked (GlcNAc...) asparagine glycosylation sites follow: Asn-1267, Asn-1300, Asn-1452, Asn-1492, Asn-1508, Asn-1621, and Asn-1624. Cystine bridges form between Cys-1439/Cys-1459, Cys-1473/Cys-1534, and Cys-1483/Cys-1532. 6-Cys domains lie at 1694-1907 (NRHV…ISNS), 1910-2035 (KING…LNKD), 2052-2199 (NVHL…VRKN), and 2204-2374 (SFKL…SDNR). 2 disulfides stabilise this stretch: Cys-1698–Cys-1726 and Cys-1740–Cys-1881. Asn-1753, Asn-1804, Asn-1882, Asn-1920, Asn-1954, and Asn-1972 each carry an N-linked (GlcNAc...) asparagine glycan. 4 cysteine pairs are disulfide-bonded: Cys-1914-Cys-1938, Cys-1952-Cys-2017, Cys-1963-Cys-2015, and Cys-2056-Cys-2074. Asn-2178 and Asn-2199 each carry an N-linked (GlcNAc...) asparagine glycan. Cystine bridges form between Cys-2208–Cys-2229, Cys-2243–Cys-2356, and Cys-2254–Cys-2354. 2 N-linked (GlcNAc...) asparagine glycosylation sites follow: Asn-2312 and Asn-2351. The disordered stretch occupies residues 2410–2432 (IKQQQEEEQQEQILKDQDDRLSR). Basic and acidic residues predominate over residues 2422 to 2432 (ILKDQDDRLSR). Asn-2439, Asn-2457, Asn-2466, Asn-2504, Asn-2586, Asn-2611, Asn-2650, Asn-2677, and Asn-2688 each carry an N-linked (GlcNAc...) asparagine glycan. 6-Cys domains lie at 2448–2663 (NEHI…ISSN), 2666–2827 (IIHG…IDEK), 2831–2979 (GKDI…INQG), and 2982–3113 (EIHG…PEPQ). Disulfide bonds link Cys-2452-Cys-2476 and Cys-2490-Cys-2638. 3 disulfides stabilise this stretch: Cys-2670-Cys-2706, Cys-2720-Cys-2804, and Cys-2730-Cys-2802. Asn-2952 carries N-linked (GlcNAc...) asparagine glycosylation. Cys-2986 and Cys-3010 are joined by a disulfide. N-linked (GlcNAc...) asparagine glycans are attached at residues Asn-3011, Asn-3016, Asn-3066, Asn-3093, and Asn-3096. Intrachain disulfides connect Cys-3024–Cys-3090 and Cys-3035–Cys-3088.

As to quaternary structure, heterodimer; heterodimerizes with PF45/48. May be processed into a 310 kDa form as the parasite emerges from the host erythrocytes.

Its subcellular location is the cell surface. The protein resides in the cell membrane. Gametocyte surface protein required for male/female gamete fusion. Also required for male gamete exflagellation and interaction with host erythrocytes. The polypeptide is Gametocyte surface protein P230 (PFS230) (Plasmodium falciparum (isolate 3D7)).